Consider the following 109-residue polypeptide: Protein TAR1 (109 aa).

The disordered stretch occupies residues 62-109; it reads HFTNNWDPRHTGFSPSMTSCSKEHRQGPATKLPSSNYNSDVEDARFQI.

It is found in the mitochondrion. May be involved in mtDNA stability or mitochondrial gene expression regulation at the post-transcriptional level. This chain is Protein TAR1 (TAR1-A), found in Kluyveromyces lactis (strain ATCC 8585 / CBS 2359 / DSM 70799 / NBRC 1267 / NRRL Y-1140 / WM37) (Yeast).